The sequence spans 463 residues: Argininosuccinate lyase (463 aa).

This sequence belongs to the lyase 1 family. Argininosuccinate lyase subfamily.

It localises to the cytoplasm. The catalysed reaction is 2-(N(omega)-L-arginino)succinate = fumarate + L-arginine. It functions in the pathway amino-acid biosynthesis; L-arginine biosynthesis; L-arginine from L-ornithine and carbamoyl phosphate: step 3/3. The protein is Argininosuccinate lyase of Methylorubrum populi (strain ATCC BAA-705 / NCIMB 13946 / BJ001) (Methylobacterium populi).